A 401-amino-acid chain; its full sequence is tRNA(Ile)-lysidine synthase (401 aa).

An ATP-binding site is contributed by 17 to 22 (SGGPDS).

The protein belongs to the tRNA(Ile)-lysidine synthase family.

It localises to the cytoplasm. It catalyses the reaction cytidine(34) in tRNA(Ile2) + L-lysine + ATP = lysidine(34) in tRNA(Ile2) + AMP + diphosphate + H(+). In terms of biological role, ligates lysine onto the cytidine present at position 34 of the AUA codon-specific tRNA(Ile) that contains the anticodon CAU, in an ATP-dependent manner. Cytidine is converted to lysidine, thus changing the amino acid specificity of the tRNA from methionine to isoleucine. The sequence is that of tRNA(Ile)-lysidine synthase from Mycoplasma mycoides subsp. mycoides SC (strain CCUG 32753 / NCTC 10114 / PG1).